Here is a 274-residue protein sequence, read N- to C-terminus: Formamidopyrimidine-DNA glycosylase (274 aa).

P2 acts as the Schiff-base intermediate with DNA in catalysis. E3 (proton donor) is an active-site residue. The active-site Proton donor; for beta-elimination activity is the K58. Positions 91 and 110 each coordinate DNA. The FPG-type zinc-finger motif lies at 238 to 272 (QVYDKTGQECVRCGTIIEKIQLGGRGTHFCPNCQR). R262 serves as the catalytic Proton donor; for delta-elimination activity.

It belongs to the FPG family. In terms of assembly, monomer. It depends on Zn(2+) as a cofactor.

The enzyme catalyses Hydrolysis of DNA containing ring-opened 7-methylguanine residues, releasing 2,6-diamino-4-hydroxy-5-(N-methyl)formamidopyrimidine.. It carries out the reaction 2'-deoxyribonucleotide-(2'-deoxyribose 5'-phosphate)-2'-deoxyribonucleotide-DNA = a 3'-end 2'-deoxyribonucleotide-(2,3-dehydro-2,3-deoxyribose 5'-phosphate)-DNA + a 5'-end 5'-phospho-2'-deoxyribonucleoside-DNA + H(+). Its function is as follows. Involved in base excision repair of DNA damaged by oxidation or by mutagenic agents. Acts as a DNA glycosylase that recognizes and removes damaged bases. Has a preference for oxidized purines, such as 7,8-dihydro-8-oxoguanine (8-oxoG). Has AP (apurinic/apyrimidinic) lyase activity and introduces nicks in the DNA strand. Cleaves the DNA backbone by beta-delta elimination to generate a single-strand break at the site of the removed base with both 3'- and 5'-phosphates. This chain is Formamidopyrimidine-DNA glycosylase, found in Streptococcus pneumoniae serotype 4 (strain ATCC BAA-334 / TIGR4).